The sequence spans 138 residues: ATP synthase epsilon chain (138 aa).

It belongs to the ATPase epsilon chain family. In terms of assembly, F-type ATPases have 2 components, CF(1) - the catalytic core - and CF(0) - the membrane proton channel. CF(1) has five subunits: alpha(3), beta(3), gamma(1), delta(1), epsilon(1). CF(0) has three main subunits: a, b and c.

Its subcellular location is the cell inner membrane. Produces ATP from ADP in the presence of a proton gradient across the membrane. The sequence is that of ATP synthase epsilon chain from Polynucleobacter necessarius subsp. necessarius (strain STIR1).